The chain runs to 143 residues: Methylglyoxal synthase (143 aa).

One can recognise an MGS-like domain in the interval 1-143 (MTVKKIALVA…DYEAYRNRII (143 aa)). Substrate-binding positions include His11, Lys15, 37 to 40 (TGST), and 57 to 58 (SG). Catalysis depends on Asp63, which acts as the Proton donor/acceptor. His90 is a binding site for substrate.

The protein belongs to the methylglyoxal synthase family.

The enzyme catalyses dihydroxyacetone phosphate = methylglyoxal + phosphate. Functionally, catalyzes the formation of methylglyoxal from dihydroxyacetone phosphate. The polypeptide is Methylglyoxal synthase (Coxiella burnetii (strain Dugway 5J108-111)).